A 538-amino-acid chain; its full sequence is Cytochrome P450 monooxygenase verH (538 aa).

A helical membrane pass occupies residues valine 2–serine 21. Residue cysteine 445 coordinates heme.

Belongs to the cytochrome P450 family. It depends on heme as a cofactor.

Its subcellular location is the membrane. It participates in secondary metabolite biosynthesis; terpenoid biosynthesis. Its pathway is mycotoxin biosynthesis. In terms of biological role, cytochrome P450 monooxygenase; part of the gene cluster that mediates the biosynthesis of the neurotoxin verrucosidin, a methylated alpha-pyrone polyketide that inhibits oxidative phosphorylation in mitochondria and thereby causes neurological diseases. The carbon backbone of verrucosidin is synthesized by the HR-PKS verA, and further modified by the other verrucodidin cluster enzymes. The sequence is that of Cytochrome P450 monooxygenase verH from Penicillium polonicum.